The following is a 57-amino-acid chain: UPF0391 membrane protein BRADO5617 (57 aa).

A run of 2 helical transmembrane segments spans residues Met1 to Gly21 and Ile30 to Leu50.

It belongs to the UPF0391 family.

It is found in the cell membrane. This is UPF0391 membrane protein BRADO5617 from Bradyrhizobium sp. (strain ORS 278).